The primary structure comprises 591 residues: Aspartate--tRNA ligase (591 aa).

Glu-174 serves as a coordination point for L-aspartate. Residues 198–201 are aspartate; the sequence is QLFK. An L-aspartate-binding site is contributed by Arg-220. Residues 220 to 222 and Gln-229 contribute to the ATP site; that span reads RDE. His-450 lines the L-aspartate pocket. Glu-486 is a binding site for ATP. An L-aspartate-binding site is contributed by Arg-493. Position 538-541 (538-541) interacts with ATP; it reads GLDR.

The protein belongs to the class-II aminoacyl-tRNA synthetase family. Type 1 subfamily. In terms of assembly, homodimer.

It localises to the cytoplasm. The enzyme catalyses tRNA(Asp) + L-aspartate + ATP = L-aspartyl-tRNA(Asp) + AMP + diphosphate. Functionally, catalyzes the attachment of L-aspartate to tRNA(Asp) in a two-step reaction: L-aspartate is first activated by ATP to form Asp-AMP and then transferred to the acceptor end of tRNA(Asp). The protein is Aspartate--tRNA ligase of Leuconostoc mesenteroides subsp. mesenteroides (strain ATCC 8293 / DSM 20343 / BCRC 11652 / CCM 1803 / JCM 6124 / NCDO 523 / NBRC 100496 / NCIMB 8023 / NCTC 12954 / NRRL B-1118 / 37Y).